The following is a 312-amino-acid chain: Taste receptor type 2 member 140 (312 aa).

Residues 1–9 are Extracellular-facing; that stretch reads MKVTVECAL. Residues 10–30 traverse the membrane as a helical segment; that stretch reads LITLIVEIIIGCLGNGFIAVV. Residues 31-46 are Cytoplasmic-facing; sequence NIMDWTKRRRFSLVDQ. A helical membrane pass occupies residues 47 to 67; sequence ILTALAISRLAFVWSLLTVLV. Residues 68 to 87 lie on the Extracellular side of the membrane; it reads ISELHSSLLITRKMLRIINN. The helical transmembrane segment at 88–108 threads the bilayer; sequence FWTVTNHFSIWLATCLSIFYF. Residues 109–133 lie on the Cytoplasmic side of the membrane; sequence LKIANFSNSIFLSLRWRVKTVVSLT. Residues 134-154 form a helical membrane-spanning segment; it reads LLVSLLLLLVNVIIINTCIVI. Topologically, residues 155–185 are extracellular; sequence SVEGYKVNMSYSSHFNNNPQISRIPLFTNTM. N-linked (GlcNAc...) asparagine glycosylation occurs at asparagine 162. A helical transmembrane segment spans residues 186 to 206; that stretch reads FTFIPFTVTLTIFLLLIFSLW. Residues 207 to 229 lie on the Cytoplasmic side of the membrane; the sequence is RHLKKMQHRAKGPRDPSTTAHIK. A helical membrane pass occupies residues 230-250; it reads ALQMVVTFLFLYTIFFLALVM. At 251 to 264 the chain is on the extracellular side; that stretch reads QAWNNEIQSKTVFN. The chain crosses the membrane as a helical span at residues 265–285; the sequence is LVFESIALAFPSGHSCVLILG. At 286-312 the chain is on the cytoplasmic side; the sequence is NSKLRQAFLTIIWWLRSSFNAAELSSP.

Belongs to the G-protein coupled receptor T2R family.

The protein localises to the membrane. Functionally, putative taste receptor which may play a role in the perception of bitterness. This chain is Taste receptor type 2 member 140, found in Rattus norvegicus (Rat).